Consider the following 93-residue polypeptide: MKTLILLSALVLLAFQVQADPIQNTDEETKTEEQPGEDDQAVSVSFGDPEGSSLQEESLRDLVCYCRTRGCKRREHMNGTCRKGHLMYTLCCR.

The signal sequence occupies residues 1-19 (MKTLILLSALVLLAFQVQA). Positions 20-58 (DPIQNTDEETKTEEQPGEDDQAVSVSFGDPEGSSLQEES) are excised as a propeptide. The disordered stretch occupies residues 22–56 (IQNTDEETKTEEQPGEDDQAVSVSFGDPEGSSLQE). Disulfide bonds link C64–C92, C66–C81, and C71–C91.

The protein belongs to the alpha-defensin family. In terms of tissue distribution, paneth cells of the small bowel.

The protein localises to the secreted. Probably contributes to the antimicrobial barrier function of the small bowel mucosa. The polypeptide is Alpha-defensin 7 (Defa7) (Mus musculus (Mouse)).